Consider the following 265-residue polypeptide: Putative hydro-lyase PA14_37210 (265 aa).

It belongs to the D-glutamate cyclase family.

The protein is Putative hydro-lyase PA14_37210 of Pseudomonas aeruginosa (strain UCBPP-PA14).